The following is a 2622-amino-acid chain: Ankyrin-3 (2622 aa).

A disordered region spans residues 1 to 44 (MAHAASQLKKNRDLEINAEEETEKKKKHRKRSRDRKKKSDANAS). Residues 25 to 38 (KKKHRKRSRDRKKK) show a composition bias toward basic residues. S39 is subject to Phosphoserine. 23 ANK repeats span residues 73 to 102 (NGLNALHLASKEGHVEVVSELLQREANVDA), 106 to 135 (KGNTALHIASLAGQAEVVKVLVTNGANVNA), 139 to 168 (NGFTPLYMAAQENHLEVVRFLLDNGASQSL), 172 to 201 (DGFTPLAVALQQGHDQVVSLLLENDTKGKV), 203 to 230 (LPALHIAARKDDTKAAALLLQNDTNADI), 242 to 271 (SGFTPLHIAAHYGNINVATLLLNRAAAVDF), 275 to 304 (NDITPLHVASKRGNANMVKLLLDRGAKIDA), 308 to 337 (DGLTPLHCGARSGHEQVVEMLLDRAAPILS), 341 to 370 (NGLSPLHMATQGDHLNCVQLLLQHNVPVDD), 374 to 403 (DYLTALHVAAHCGHYKVAKVLLDKKANPNA), 407 to 436 (NGFTPLHIACKKNRIRVMELLLKHGASIQA), 440 to 469 (SGLTPIHVAAFMGHVNIVSQLMHHGASPNT), 473 to 502 (RGETALHMAARSGQAEVVRYLVQDGAQVEA), 506 to 535 (DDQTPLHISARLGKADIVQQLLQQGASPNA), 539 to 568 (SGYTPLHLSAREGHEDVAAFLLDHGASLSI), 572 to 601 (KGFTPLHVAAKYGKLEVASLLLQKSASPDA), 605 to 634 (SGLTPLHVAAHYDNQKVALLLLDQGASPHA), 638 to 667 (NGYTPLHIAAKKNQMDIATSLLEYGADANA), 671 to 700 (QGIASVHLAAQEGHVDMVSLLLSRNANVNL), 704 to 733 (SGLTPLHLAAQEDRVNVAEVLVNQGAHVDA), 737 to 766 (MGYTPLHVGCHYGNIKIVNFLLQHSAKVNA), 770 to 799 (NGYTPLHQAAQQGHTHIINVLLQNNASPNE), and 803 to 832 (NGNTALAIARRLGYISVVDTLKVVTEEIMT). A Phosphoserine modification is found at S631. Residues V851, S855, S869, S875, S921, S924, S930, S965, S967, and S1121 each carry the phosphoserine modification. Residues 868-889 (LSDGEYISDGEEGEDAITGDTD) form a disordered region. Acidic residues predominate over residues 873-884 (YISDGEEGEDAI). 2 ZU5 domains span residues 992 to 1147 (FLVS…VVSR) and 1149 to 1296 (KQES…LADC). Phosphoserine occurs at positions 1458 and 1469. The disordered stretch occupies residues 1510 to 1539 (TPITVPGPAKSGSLSSSPSNTPSASPLKSI). Residues 1515–1536 (PGPAKSGSLSSSPSNTPSASPL) are compositionally biased toward low complexity. Phosphoserine is present on residues S1621, S1624, S1679, S1984, S2102, S2114, and S2117. 3 disordered regions span residues 1968–1992 (VESKGPPKSPKSDKGHSPEDDWTEF), 2099–2147 (ILES…FHEV), and 2292–2312 (SPDVAKSAAETSAQHAEKDNQ). Basic and acidic residues predominate over residues 1977–1986 (PKSDKGHSPE). Positions 2106–2127 (FSQHDQDKSPLSDSGFETRSEK) are enriched in basic and acidic residues. The span at 2128–2137 (TPSAPQSAES) shows a compositional bias: polar residues. The Death domain maps to 2336–2420 (TDIRMAIVAD…DIVTLLEGPI (85 aa)). Residues S2457, S2475, and S2544 each carry the phosphoserine modification. Residues 2568 to 2622 (CVPVGMKKMTRTPADGKARLNLQEEEGSARSEPKQGEGYKVKTKKEIRNVEKKAH) form a disordered region. A compositionally biased stretch (basic and acidic residues) spans 2594–2622 (GSARSEPKQGEGYKVKTKKEIRNVEKKAH).

As to quaternary structure, may be a constituent of a NFASC/NRCAM/ankyrin G complex. Interacts with RHBG. Directly interacts with DMD and betaDAG1; this interaction does not interfere with DMD-binding and is required for DMD and betaDAG1 retention at costameres. Interacts (via N-terminal ANK repeats) with SCHIP1 isoform 7 (via C-terminus); this interaction is required for the localization at axon initial segments (AISs) and nodes of Ranvier (NRs). Interacts with PLEC and FLNC. Interacts (via ANK repeats) with IQCJ-SCHIP1; required for IQCJ-SCHIP1 localization at axon initial segments (AIS) and nodes of Ranvier. Interacts with SCHIP1. Interacts with KCNA1; this inhibits channel activity. Interacts with SCN5A. Interacts with PKP2 and GJA1/CX43. Interacts (via its C-terminal muscle-specific Obscurin/Titin-Binding-related domain sequence) with PLEC and FLNC. In terms of tissue distribution, expressed in the heart (at protein level). Expressed in skeletal muscle (at protein level). Expressed at highest levels in brain and testis, followed by skin, kidney, liver and spleen. May be specifically expressed in muscle tissues, including heart and skeletal muscle (extensor digitorum longus) (at protein level). As to expression, expressed in skeletal muscle, brain, lung, heart, testes and kidney.

Its subcellular location is the cytoplasm. It is found in the cytoskeleton. The protein localises to the cell projection. The protein resides in the axon. It localises to the cell membrane. Its subcellular location is the sarcolemma. It is found in the postsynaptic cell membrane. The protein localises to the lysosome. The protein resides in the T-tubule. Its function is as follows. Membrane-cytoskeleton linker. May participate in the maintenance/targeting of ion channels and cell adhesion molecules at the nodes of Ranvier and axonal initial segments. In skeletal muscle, required for costamere localization of DMD and betaDAG1. Regulates KCNA1 channel activity in function of dietary Mg(2+) levels, and thereby contributes to the regulation of renal Mg(2+) reabsorption. Required for intracellular adhesion and junctional conductance in myocytes, potentially via stabilization of GJA1/CX43 protein abundance and promotion of PKP2, GJA1/CX43, and SCN5A/Nav1.5 localization to cell-cell junctions. The polypeptide is Ankyrin-3 (Ank3) (Rattus norvegicus (Rat)).